A 329-amino-acid polypeptide reads, in one-letter code: Lipoyl synthase (329 aa).

The interval 1-23 is disordered; that stretch reads MTDLTATPAPAEPAASAYDPTAK. 7 residues coordinate [4Fe-4S] cluster: Cys-76, Cys-81, Cys-87, Cys-102, Cys-106, Cys-109, and Ser-316. The Radical SAM core domain maps to 87 to 305; that stretch reads CFGKGTATFM…EEEAYKMGFT (219 aa).

It belongs to the radical SAM superfamily. Lipoyl synthase family. The cofactor is [4Fe-4S] cluster.

Its subcellular location is the cytoplasm. It catalyses the reaction [[Fe-S] cluster scaffold protein carrying a second [4Fe-4S](2+) cluster] + N(6)-octanoyl-L-lysyl-[protein] + 2 oxidized [2Fe-2S]-[ferredoxin] + 2 S-adenosyl-L-methionine + 4 H(+) = [[Fe-S] cluster scaffold protein] + N(6)-[(R)-dihydrolipoyl]-L-lysyl-[protein] + 4 Fe(3+) + 2 hydrogen sulfide + 2 5'-deoxyadenosine + 2 L-methionine + 2 reduced [2Fe-2S]-[ferredoxin]. It functions in the pathway protein modification; protein lipoylation via endogenous pathway; protein N(6)-(lipoyl)lysine from octanoyl-[acyl-carrier-protein]: step 2/2. Functionally, catalyzes the radical-mediated insertion of two sulfur atoms into the C-6 and C-8 positions of the octanoyl moiety bound to the lipoyl domains of lipoate-dependent enzymes, thereby converting the octanoylated domains into lipoylated derivatives. The protein is Lipoyl synthase of Burkholderia pseudomallei (strain 1106a).